The primary structure comprises 275 residues: Formamidopyrimidine-DNA glycosylase (275 aa).

P2 serves as the catalytic Schiff-base intermediate with DNA. Catalysis depends on E3, which acts as the Proton donor. Catalysis depends on K58, which acts as the Proton donor; for beta-elimination activity. 3 residues coordinate DNA: H92, R111, and R154. Residues 239–273 (HVYHRQGLPCQRCGTPIERIKVAQRGTHFCPHCQV) form an FPG-type zinc finger. The active-site Proton donor; for delta-elimination activity is R263.

The protein belongs to the FPG family. As to quaternary structure, monomer. Zn(2+) is required as a cofactor.

The enzyme catalyses Hydrolysis of DNA containing ring-opened 7-methylguanine residues, releasing 2,6-diamino-4-hydroxy-5-(N-methyl)formamidopyrimidine.. It catalyses the reaction 2'-deoxyribonucleotide-(2'-deoxyribose 5'-phosphate)-2'-deoxyribonucleotide-DNA = a 3'-end 2'-deoxyribonucleotide-(2,3-dehydro-2,3-deoxyribose 5'-phosphate)-DNA + a 5'-end 5'-phospho-2'-deoxyribonucleoside-DNA + H(+). Functionally, involved in base excision repair of DNA damaged by oxidation or by mutagenic agents. Acts as a DNA glycosylase that recognizes and removes damaged bases. Has a preference for oxidized purines, such as 7,8-dihydro-8-oxoguanine (8-oxoG). Has AP (apurinic/apyrimidinic) lyase activity and introduces nicks in the DNA strand. Cleaves the DNA backbone by beta-delta elimination to generate a single-strand break at the site of the removed base with both 3'- and 5'-phosphates. The chain is Formamidopyrimidine-DNA glycosylase from Pediococcus pentosaceus (strain ATCC 25745 / CCUG 21536 / LMG 10740 / 183-1w).